The primary structure comprises 181 residues: Adenine phosphoribosyltransferase (181 aa).

This sequence belongs to the purine/pyrimidine phosphoribosyltransferase family. In terms of assembly, homodimer.

It is found in the cytoplasm. It carries out the reaction AMP + diphosphate = 5-phospho-alpha-D-ribose 1-diphosphate + adenine. Its pathway is purine metabolism; AMP biosynthesis via salvage pathway; AMP from adenine: step 1/1. Its function is as follows. Catalyzes a salvage reaction resulting in the formation of AMP, that is energically less costly than de novo synthesis. The protein is Adenine phosphoribosyltransferase of Rhodopseudomonas palustris (strain HaA2).